The following is a 141-amino-acid chain: Large ribosomal subunit protein uL11 (141 aa).

Belongs to the universal ribosomal protein uL11 family. Part of the ribosomal stalk of the 50S ribosomal subunit. Interacts with L10 and the large rRNA to form the base of the stalk. L10 forms an elongated spine to which L12 dimers bind in a sequential fashion forming a multimeric L10(L12)X complex. In terms of processing, one or more lysine residues are methylated.

Its function is as follows. Forms part of the ribosomal stalk which helps the ribosome interact with GTP-bound translation factors. In Crocosphaera subtropica (strain ATCC 51142 / BH68) (Cyanothece sp. (strain ATCC 51142)), this protein is Large ribosomal subunit protein uL11.